Here is a 151-residue protein sequence, read N- to C-terminus: MLP-like protein 329 (151 aa).

It belongs to the MLP family.

The polypeptide is MLP-like protein 329 (MLP329) (Arabidopsis thaliana (Mouse-ear cress)).